The primary structure comprises 142 residues: Negative cofactor 2 complex subunit alpha (142 aa).

The span at 1–11 (MADQVPVTTQL) shows a compositional bias: polar residues. A disordered region spans residues 1–43 (MADQVPVTTQLPPIKPEHEVPLDAGGSPVGNMGTNSNNNNELG). At S27 the chain carries Phosphoserine. Residues 29–137 (VGNMGTNSNN…LCVEEGQTQP (109 aa)) enclose the Histone-fold domain. S141 bears the Phosphoserine mark.

Belongs to the NC2 alpha/DRAP1 family. As to quaternary structure, component of the NC2 (negative cofactor 2) complex composed of BUR6 and NCB2. The NC2 complex associates with SPT15/TBP. Interacts with SPT15/TBP.

It is found in the nucleus. In terms of biological role, component of the NC2 complex which represses RNA polymerase II transcription through binding to SPT15/TBP and thereby inhibiting the assembly of the preinitiation complex. The NC2 complex may also mediate transcriptional activation from TATA-driven promoters through association with SPT15/TBP. In Saccharomyces cerevisiae (strain ATCC 204508 / S288c) (Baker's yeast), this protein is Negative cofactor 2 complex subunit alpha (BUR6).